We begin with the raw amino-acid sequence, 329 residues long: ATP-dependent (S)-NAD(P)H-hydrate dehydratase (329 aa).

A mitochondrion-targeting transit peptide spans 1–28 (MALGPGCRAVRGCRPVLKRAFSLHKAHS). Positions 35–326 (ILQLVRSVVP…AEVGPAFRRL (292 aa)) constitute a YjeF C-terminal domain. Lys-49 bears the N6-acetyllysine mark. Tyr-67 is subject to Phosphotyrosine. (6S)-NADPHX-binding positions include Gly-135 and 188–194 (NHVEFGR). ATP is bound by residues 228-232 (KGEQD) and 247-256 (GSGRRCGGQG). Asp-257 contacts (6S)-NADPHX.

This sequence belongs to the NnrD/CARKD family. Requires Mg(2+) as cofactor.

The protein localises to the mitochondrion. It carries out the reaction (6S)-NADHX + ATP = ADP + phosphate + NADH + H(+). It catalyses the reaction (6S)-NADPHX + ATP = ADP + phosphate + NADPH + H(+). Functionally, catalyzes the dehydration of the S-form of NAD(P)HX at the expense of ATP, which is converted to ADP. Together with NAD(P)HX epimerase, which catalyzes the epimerization of the S- and R-forms, the enzyme allows the repair of both epimers of NAD(P)HX, a damaged form of NAD(P)H that is a result of enzymatic or heat-dependent hydration. This Bos taurus (Bovine) protein is ATP-dependent (S)-NAD(P)H-hydrate dehydratase.